The following is a 147-amino-acid chain: MKIIATNKKAFSDYIILETYEAGIELRGTEVKSLRESGANFKDSFCRIKNGEVFLLNLNIPQYRNGSLNNHDPERPRRLLLHKKEIHRLLGKVKEQGLTIIPTKIYFNNRGLVKVEIAVAKGKKKYDKREDIKKREINRRIREYLKG.

This sequence belongs to the SmpB family.

It localises to the cytoplasm. Functionally, required for rescue of stalled ribosomes mediated by trans-translation. Binds to transfer-messenger RNA (tmRNA), required for stable association of tmRNA with ribosomes. tmRNA and SmpB together mimic tRNA shape, replacing the anticodon stem-loop with SmpB. tmRNA is encoded by the ssrA gene; the 2 termini fold to resemble tRNA(Ala) and it encodes a 'tag peptide', a short internal open reading frame. During trans-translation Ala-aminoacylated tmRNA acts like a tRNA, entering the A-site of stalled ribosomes, displacing the stalled mRNA. The ribosome then switches to translate the ORF on the tmRNA; the nascent peptide is terminated with the 'tag peptide' encoded by the tmRNA and targeted for degradation. The ribosome is freed to recommence translation, which seems to be the essential function of trans-translation. The polypeptide is SsrA-binding protein (Thermosipho melanesiensis (strain DSM 12029 / CIP 104789 / BI429)).